The sequence spans 257 residues: uncharacterized protein (257 aa).

Active-site charge relay system residues include Ser-122 and His-236.

Belongs to the peptidase S9B family.

This is an uncharacterized protein from Bacillus subtilis (strain 168).